The following is a 536-amino-acid chain: GPI alpha-1,2-mannosyltransferase 3 (536 aa).

Asparagine 15 is a glycosylation site (N-linked (GlcNAc...) asparagine). The next 2 membrane-spanning stretches (helical) occupy residues 40–60 and 118–138; these read IFGI…CVLV and VYLL…YADV. N-linked (GlcNAc...) asparagine glycosylation is present at asparagine 176. 6 helical membrane-spanning segments follow: residues 206 to 226, 243 to 263, 297 to 317, 322 to 342, 344 to 364, and 369 to 389; these read LVSL…PLIF, YFPI…FFYG, GLPV…LLST, ILLL…HKEF, FIYP…AKLQ, and AAAG…GLVH. N-linked (GlcNAc...) asparagine glycosylation is present at asparagine 467.

The protein belongs to the glycosyltransferase 22 family. PIGB subfamily.

The protein localises to the endoplasmic reticulum membrane. It functions in the pathway glycolipid biosynthesis; glycosylphosphatidylinositol-anchor biosynthesis. Alpha-1,2-mannosyltransferase that catalyzes the transfer of the third mannose, via an alpha-1,2 bond, from a dolichol-phosphate-mannose (Dol-P-Man) to an alpha-D-Man-(1-&gt;6)-2-PEtn-alpha-D-Man-(1-&gt;4)-alpha-D-GlcN-(1-&gt;6)-(1-radyl,2-acyl-sn-glycero-3-phospho)-2-acyl-inositol intermediate to generate an alpha-D-Man-(1-&gt;2)-alpha-D-Man-(1-&gt;6)-2-PEtn-alpha-D-Man-(1-&gt;4)-alpha-D-GlcN-(1-&gt;6)-(1-radyl,2-acyl-sn-glycero-3-phospho)-2-acyl-inositol (also termed H6) and participates in the nineth step of the glycosylphosphatidylinositol-anchor biosynthesis. May also add the third mannose to an alpha-D-Man-(1-&gt;6)-alpha-D-Man-(1-&gt;4)-alpha-D-GlcN-(1-&gt;6)-(1-radyl,2-acyl-sn-glycero-3-phospho)-2-acyl-inositol (also termed H3) intermediate generating an alpha-D-Man-(1-&gt;2)-alpha-D-Man-(1-&gt;6)-alpha-D-Man-(1-&gt;4)-alpha-D-GlcN-(1-&gt;6)-(1-radyl,2-acyl-sn-glycero-3-phospho)-2-acyl-inositol (also termed H4). This Danio rerio (Zebrafish) protein is GPI alpha-1,2-mannosyltransferase 3.